A 141-amino-acid chain; its full sequence is Lutropin subunit beta (141 aa).

The first 20 residues, 1–20, serve as a signal peptide directing secretion; it reads MEMLQGLLLLLLLSMGGAWA. 6 cysteine pairs are disulfide-bonded: Cys-29/Cys-77, Cys-43/Cys-92, Cys-46/Cys-130, Cys-54/Cys-108, Cys-58/Cys-110, and Cys-113/Cys-120. N-linked (GlcNAc...) asparagine glycosylation is found at Asn-33 and Asn-50.

This sequence belongs to the glycoprotein hormones subunit beta family. Heterodimer of a common alpha chain and a unique beta chain which confers biological specificity to thyrotropin, lutropin, follitropin and gonadotropin.

It is found in the secreted. Its function is as follows. Promotes spermatogenesis and ovulation by stimulating the testes and ovaries to synthesize steroids. This Gorilla gorilla gorilla (Western lowland gorilla) protein is Lutropin subunit beta (LHB).